The chain runs to 152 residues: Deoxyuridine 5'-triphosphate nucleotidohydrolase (152 aa).

Substrate is bound by residues R72–G74, N85, and T89–D91.

The protein belongs to the dUTPase family. It depends on Mg(2+) as a cofactor.

It carries out the reaction dUTP + H2O = dUMP + diphosphate + H(+). It participates in pyrimidine metabolism; dUMP biosynthesis; dUMP from dCTP (dUTP route): step 2/2. This enzyme is involved in nucleotide metabolism: it produces dUMP, the immediate precursor of thymidine nucleotides and it decreases the intracellular concentration of dUTP so that uracil cannot be incorporated into DNA. This is Deoxyuridine 5'-triphosphate nucleotidohydrolase from Nitrobacter hamburgensis (strain DSM 10229 / NCIMB 13809 / X14).